The following is a 699-amino-acid chain: Polyribonucleotide nucleotidyltransferase (699 aa).

2 residues coordinate Mg(2+): D488 and D494. In terms of domain architecture, KH spans P555 to I614. In terms of domain architecture, S1 motif spans G624–K692.

This sequence belongs to the polyribonucleotide nucleotidyltransferase family. As to quaternary structure, component of the RNA degradosome, which is a multiprotein complex involved in RNA processing and mRNA degradation. The cofactor is Mg(2+).

It is found in the cytoplasm. It catalyses the reaction RNA(n+1) + phosphate = RNA(n) + a ribonucleoside 5'-diphosphate. In terms of biological role, involved in mRNA degradation. Catalyzes the phosphorolysis of single-stranded polyribonucleotides processively in the 3'- to 5'-direction. The polypeptide is Polyribonucleotide nucleotidyltransferase (Blochmanniella pennsylvanica (strain BPEN)).